A 233-amino-acid polypeptide reads, in one-letter code: Enolase-phosphatase E1 (233 aa).

It belongs to the HAD-like hydrolase superfamily. MasA/MtnC family. Monomer. Requires Mg(2+) as cofactor.

The enzyme catalyses 5-methylsulfanyl-2,3-dioxopentyl phosphate + H2O = 1,2-dihydroxy-5-(methylsulfanyl)pent-1-en-3-one + phosphate. It functions in the pathway amino-acid biosynthesis; L-methionine biosynthesis via salvage pathway; L-methionine from S-methyl-5-thio-alpha-D-ribose 1-phosphate: step 3/6. The protein operates within amino-acid biosynthesis; L-methionine biosynthesis via salvage pathway; L-methionine from S-methyl-5-thio-alpha-D-ribose 1-phosphate: step 4/6. Its function is as follows. Bifunctional enzyme that catalyzes the enolization of 2,3-diketo-5-methylthiopentyl-1-phosphate (DK-MTP-1-P) into the intermediate 2-hydroxy-3-keto-5-methylthiopentenyl-1-phosphate (HK-MTPenyl-1-P), which is then dephosphorylated to form the acireductone 1,2-dihydroxy-3-keto-5-methylthiopentene (DHK-MTPene). The sequence is that of Enolase-phosphatase E1 from Hahella chejuensis (strain KCTC 2396).